We begin with the raw amino-acid sequence, 212 residues long: Ribosomal RNA small subunit methyltransferase G (212 aa).

S-adenosyl-L-methionine-binding positions include glycine 80, leucine 85, 131–132, and arginine 146; that span reads AE.

The protein belongs to the methyltransferase superfamily. RNA methyltransferase RsmG family.

It localises to the cytoplasm. It catalyses the reaction guanosine(527) in 16S rRNA + S-adenosyl-L-methionine = N(7)-methylguanosine(527) in 16S rRNA + S-adenosyl-L-homocysteine. In terms of biological role, specifically methylates the N7 position of guanine in position 527 of 16S rRNA. The polypeptide is Ribosomal RNA small subunit methyltransferase G (Xanthomonas oryzae pv. oryzae (strain KACC10331 / KXO85)).